We begin with the raw amino-acid sequence, 59 residues long: Sperm protamine P1-type (59 aa).

A disordered region spans residues 1 to 59 (MARYRRNRSRSRSRRRRRRRGGRGGRRGRRRRRHGQRRRGRRGRERTRRRRRRRRRSSS).

Belongs to the protamine P1 family. In terms of tissue distribution, testis.

The protein localises to the nucleus. It localises to the chromosome. In terms of biological role, protamines substitute for histones in the chromatin of sperm during the haploid phase of spermatogenesis. They compact sperm DNA into a highly condensed, stable and inactive complex. The polypeptide is Sperm protamine P1-type (Chrysemys picta bellii (Western painted turtle)).